The sequence spans 328 residues: 2-hydroxyisoflavanone dehydratase (328 aa).

The Involved in the stabilization of the negatively charged intermediate by the formation of the oxyanion hole motif lies at 85 to 87; the sequence is HGG. Residues Thr-173, Asp-272, and His-304 contribute to the active site.

It belongs to the 'GDXG' lipolytic enzyme family.

It carries out the reaction (2R,3S)-2,4',7-trihydroxyisoflavanone = daidzein + H2O + H(+). It catalyses the reaction 2-hydroxy-2,3-dihydrogenistein = genistein + H2O + H(+). The enzyme catalyses a carboxylic ester + H2O = an alcohol + a carboxylate + H(+). Its pathway is secondary metabolite biosynthesis; flavonoid biosynthesis. Functionally, dehydratase that mediates the biosynthesis of isoflavonoids. Can better use 2,7-dihydroxy-4'-methoxyisoflavanone as substrate. Has also a slight carboxylesterase activity toward p-nitrophenyl butyrate. This chain is 2-hydroxyisoflavanone dehydratase (HIDM), found in Glycyrrhiza echinata (Licorice).